The chain runs to 129 residues: Small ribosomal subunit protein uS8 (129 aa).

It belongs to the universal ribosomal protein uS8 family. As to quaternary structure, part of the 30S ribosomal subunit. Contacts proteins S5 and S12.

In terms of biological role, one of the primary rRNA binding proteins, it binds directly to 16S rRNA central domain where it helps coordinate assembly of the platform of the 30S subunit. The sequence is that of Small ribosomal subunit protein uS8 from Bdellovibrio bacteriovorus (strain ATCC 15356 / DSM 50701 / NCIMB 9529 / HD100).